A 417-amino-acid chain; its full sequence is Cysteate synthase (417 aa).

Lys102 carries the N6-(pyridoxal phosphate)lysine modification. Positions 128 and 380 each coordinate pyridoxal 5'-phosphate.

Belongs to the threonine synthase family. Cysteate synthase subfamily. In terms of assembly, homotrimer. The cofactor is pyridoxal 5'-phosphate.

It carries out the reaction O-phospho-L-serine + sulfite + H(+) = L-cysteate + phosphate. The protein operates within cofactor biosynthesis; coenzyme M biosynthesis. Specifically catalyzes the beta-elimination of phosphate from L-phosphoserine and the beta-addition of sulfite to the dehydroalanine intermediate to produce L-cysteate. This is Cysteate synthase from Methanocella arvoryzae (strain DSM 22066 / NBRC 105507 / MRE50).